Consider the following 113-residue polypeptide: N-alpha-acetyltransferase 38-A, NatC auxiliary subunit (113 aa).

Residues 1–29 (MAAVLEENGCSRQSSPSAGDSDAEPGDTA) form a disordered region. One can recognise a Sm domain in the interval 28-106 (TARHKLESLL…IVSIQVELES (79 aa)).

The protein belongs to the snRNP Sm proteins family. As to quaternary structure, component of the N-terminal acetyltransferase C (NatC) complex, which is composed of naa35, naa38 and naa30.

The protein resides in the cytoplasm. Its function is as follows. Auxillary component of the N-terminal acetyltransferase C (NatC) complex which catalyzes acetylation of N-terminal methionine residues. The polypeptide is N-alpha-acetyltransferase 38-A, NatC auxiliary subunit (naa38-a) (Xenopus laevis (African clawed frog)).